The following is a 117-amino-acid chain: Ribosome maturation factor RimP (117 aa).

This sequence belongs to the RimP family.

The protein localises to the cytoplasm. Required for maturation of 30S ribosomal subunits. The polypeptide is Ribosome maturation factor RimP (Rickettsia prowazekii (strain Madrid E)).